Consider the following 196-residue polypeptide: Putative NADH dehydrogenase/NAD(P)H nitroreductase Smal_0358 (196 aa).

It belongs to the nitroreductase family. HadB/RutE subfamily. The cofactor is FMN.

The chain is Putative NADH dehydrogenase/NAD(P)H nitroreductase Smal_0358 from Stenotrophomonas maltophilia (strain R551-3).